The following is a 223-amino-acid chain: Deoxyribose-phosphate aldolase (223 aa).

Asp-89 functions as the Proton donor/acceptor in the catalytic mechanism. The active-site Schiff-base intermediate with acetaldehyde is Lys-152. Lys-181 (proton donor/acceptor) is an active-site residue.

The protein belongs to the DeoC/FbaB aldolase family. DeoC type 1 subfamily.

The protein resides in the cytoplasm. The enzyme catalyses 2-deoxy-D-ribose 5-phosphate = D-glyceraldehyde 3-phosphate + acetaldehyde. It participates in carbohydrate degradation; 2-deoxy-D-ribose 1-phosphate degradation; D-glyceraldehyde 3-phosphate and acetaldehyde from 2-deoxy-alpha-D-ribose 1-phosphate: step 2/2. Its function is as follows. Catalyzes a reversible aldol reaction between acetaldehyde and D-glyceraldehyde 3-phosphate to generate 2-deoxy-D-ribose 5-phosphate. The protein is Deoxyribose-phosphate aldolase of Bacillus cereus (strain B4264).